Consider the following 223-residue polypeptide: Small ribosomal subunit protein uS3 (223 aa).

Positions 39-108 constitute a KH type-2 domain; that stretch reads IRKFVKKKGA…VILINIVEVK (70 aa).

Belongs to the universal ribosomal protein uS3 family. In terms of assembly, part of the 30S ribosomal subunit. Forms a tight complex with proteins S10 and S14.

Binds the lower part of the 30S subunit head. Binds mRNA in the 70S ribosome, positioning it for translation. This chain is Small ribosomal subunit protein uS3, found in Clostridium kluyveri (strain NBRC 12016).